The primary structure comprises 539 residues: Chaperonin GroEL (539 aa).

ATP-binding positions include 29-32 (TLGP), 86-90 (DGTTT), Gly-413, 477-479 (NAA), and Asp-493.

This sequence belongs to the chaperonin (HSP60) family. In terms of assembly, forms a cylinder of 14 subunits composed of two heptameric rings stacked back-to-back. Interacts with the co-chaperonin GroES.

It is found in the cytoplasm. The enzyme catalyses ATP + H2O + a folded polypeptide = ADP + phosphate + an unfolded polypeptide.. In terms of biological role, together with its co-chaperonin GroES, plays an essential role in assisting protein folding. The GroEL-GroES system forms a nano-cage that allows encapsulation of the non-native substrate proteins and provides a physical environment optimized to promote and accelerate protein folding. This chain is Chaperonin GroEL, found in Clavibacter michiganensis subsp. michiganensis (strain NCPPB 382).